A 219-amino-acid chain; its full sequence is PKHD-type hydroxylase AM1_3707 (219 aa).

Residues 78 to 172 form the Fe2OG dioxygenase domain; that stretch reads SIHTLLFSRY…RLVAVGWVQS (95 aa). 3 residues coordinate Fe cation: H96, D98, and H153. R163 is a binding site for 2-oxoglutarate.

Requires Fe(2+) as cofactor. The cofactor is L-ascorbate.

The chain is PKHD-type hydroxylase AM1_3707 from Acaryochloris marina (strain MBIC 11017).